The following is a 144-amino-acid chain: Large ribosomal subunit protein uL16 (144 aa).

Residues 1 to 19 show a composition bias toward basic residues; that stretch reads MLLPKRVKYRRQHRPKTTG. Residues 1–23 form a disordered region; it reads MLLPKRVKYRRQHRPKTTGRSKG.

It belongs to the universal ribosomal protein uL16 family. In terms of assembly, part of the 50S ribosomal subunit.

Binds 23S rRNA and is also seen to make contacts with the A and possibly P site tRNAs. This Staphylococcus haemolyticus (strain JCSC1435) protein is Large ribosomal subunit protein uL16.